A 256-amino-acid chain; its full sequence is NAD-dependent protein deacylase 4 (256 aa).

Positions 1-250 constitute a Deacetylase sirtuin-type domain; it reads MRLPAEALKD…AKIHESLSTG (250 aa). 19 to 39 is an NAD(+) binding site; sequence GAGISAESGILTYLDQMPKLW. Tyr-64 and Arg-67 together coordinate substrate. 98 to 101 contributes to the NAD(+) binding site; the sequence is QNVD. The active-site Proton acceptor is the His-116. Positions 124, 127, 152, and 155 each coordinate Zn(2+). Residues 192 to 194, 218 to 220, and Ala-236 each bind NAD(+); these read GTS and NTV.

This sequence belongs to the sirtuin family. Class III subfamily. Requires Zn(2+) as cofactor.

It is found in the cytoplasm. The catalysed reaction is N(6)-acetyl-L-lysyl-[protein] + NAD(+) + H2O = 2''-O-acetyl-ADP-D-ribose + nicotinamide + L-lysyl-[protein]. The enzyme catalyses N(6)-succinyl-L-lysyl-[protein] + NAD(+) + H2O = 2''-O-succinyl-ADP-D-ribose + nicotinamide + L-lysyl-[protein]. NAD-dependent lysine deacetylase and desuccinylase that specifically removes acetyl and succinyl groups on target proteins. Modulates the activities of several proteins which are inactive in their acylated form. The protein is NAD-dependent protein deacylase 4 of Pseudomonas syringae pv. tomato (strain ATCC BAA-871 / DC3000).